Reading from the N-terminus, the 431-residue chain is 2-oxoisovalerate dehydrogenase subunit alpha, mitochondrial (431 aa).

Thiamine diphosphate is bound at residue 140 to 142; that stretch reads QYR. K(+) is bound by residues serine 189, threonine 194, and glutamine 195.

This sequence belongs to the BCKDHA family. The cofactor is thiamine diphosphate.

The protein resides in the mitochondrion matrix. It carries out the reaction N(6)-[(R)-lipoyl]-L-lysyl-[protein] + 3-methyl-2-oxobutanoate + H(+) = N(6)-[(R)-S(8)-2-methylpropanoyldihydrolipoyl]-L-lysyl-[protein] + CO2. It participates in lipid metabolism; fatty acid biosynthesis. Functionally, the branched-chain alpha-keto dehydrogenase complex catalyzes the overall conversion of alpha-keto acids to acyl-CoA and CO(2). It contains multiple copies of three enzymatic components: branched-chain alpha-keto acid decarboxylase (E1), lipoamide acyltransferase (E2) and lipoamide dehydrogenase (E3). Required for the production of the monomethyl branched-chain fatty acids (mmBCFAs) isopentadecanoate (C15iso) and isoheptadecanoate (C17iso). The polypeptide is 2-oxoisovalerate dehydrogenase subunit alpha, mitochondrial (Caenorhabditis elegans).